The following is a 447-amino-acid chain: tRNA-2-methylthio-N(6)-dimethylallyladenosine synthase (447 aa).

The 117-residue stretch at 14–130 (KKVYIRTFGC…LPAMIANAGQ (117 aa)) folds into the MTTase N-terminal domain. C23, C59, C93, C166, C170, and C173 together coordinate [4Fe-4S] cluster. The region spanning 152–382 (RSGTISAFIP…IALQGSISGE (231 aa)) is the Radical SAM core domain. The TRAM domain occupies 385–447 (AAEVGAVVEV…TPATLIGTPA (63 aa)).

This sequence belongs to the methylthiotransferase family. MiaB subfamily. As to quaternary structure, monomer. [4Fe-4S] cluster is required as a cofactor.

It is found in the cytoplasm. It carries out the reaction N(6)-dimethylallyladenosine(37) in tRNA + (sulfur carrier)-SH + AH2 + 2 S-adenosyl-L-methionine = 2-methylsulfanyl-N(6)-dimethylallyladenosine(37) in tRNA + (sulfur carrier)-H + 5'-deoxyadenosine + L-methionine + A + S-adenosyl-L-homocysteine + 2 H(+). Catalyzes the methylthiolation of N6-(dimethylallyl)adenosine (i(6)A), leading to the formation of 2-methylthio-N6-(dimethylallyl)adenosine (ms(2)i(6)A) at position 37 in tRNAs that read codons beginning with uridine. This Chlorobium phaeobacteroides (strain BS1) protein is tRNA-2-methylthio-N(6)-dimethylallyladenosine synthase.